Here is a 475-residue protein sequence, read N- to C-terminus: Bifunctional protein HldE (475 aa).

The segment at 1–320 is ribokinase; sequence MNSSYLNFKD…AIMFQRSHNT (320 aa). 196-199 serves as a coordination point for ATP; that stretch reads NLLE. The active site involves D265. Residues 346–475 form a cytidylyltransferase region; sequence FTNGCFDILH…TTSIIEKANL (130 aa).

This sequence in the N-terminal section; belongs to the carbohydrate kinase PfkB family. It in the C-terminal section; belongs to the cytidylyltransferase family. As to quaternary structure, homodimer.

The catalysed reaction is D-glycero-beta-D-manno-heptose 7-phosphate + ATP = D-glycero-beta-D-manno-heptose 1,7-bisphosphate + ADP + H(+). It carries out the reaction D-glycero-beta-D-manno-heptose 1-phosphate + ATP + H(+) = ADP-D-glycero-beta-D-manno-heptose + diphosphate. Its pathway is nucleotide-sugar biosynthesis; ADP-L-glycero-beta-D-manno-heptose biosynthesis; ADP-L-glycero-beta-D-manno-heptose from D-glycero-beta-D-manno-heptose 7-phosphate: step 1/4. It functions in the pathway nucleotide-sugar biosynthesis; ADP-L-glycero-beta-D-manno-heptose biosynthesis; ADP-L-glycero-beta-D-manno-heptose from D-glycero-beta-D-manno-heptose 7-phosphate: step 3/4. Catalyzes the phosphorylation of D-glycero-D-manno-heptose 7-phosphate at the C-1 position to selectively form D-glycero-beta-D-manno-heptose-1,7-bisphosphate. Its function is as follows. Catalyzes the ADP transfer from ATP to D-glycero-beta-D-manno-heptose 1-phosphate, yielding ADP-D-glycero-beta-D-manno-heptose. The sequence is that of Bifunctional protein HldE from Marinomonas sp. (strain MWYL1).